The sequence spans 247 residues: Adenosylcobinamide-GDP ribazoletransferase (247 aa).

Transmembrane regions (helical) follow at residues 34 to 54 (IITF…VFMA), 59 to 79 (FGVP…TGGF), 113 to 133 (GGLA…ELAL), 138 to 158 (ILAS…LLMY), and 194 to 214 (VLLP…AIFI).

The protein belongs to the CobS family. Mg(2+) is required as a cofactor.

The protein resides in the cell inner membrane. It carries out the reaction alpha-ribazole + adenosylcob(III)inamide-GDP = adenosylcob(III)alamin + GMP + H(+). It catalyses the reaction alpha-ribazole 5'-phosphate + adenosylcob(III)inamide-GDP = adenosylcob(III)alamin 5'-phosphate + GMP + H(+). It functions in the pathway cofactor biosynthesis; adenosylcobalamin biosynthesis; adenosylcobalamin from cob(II)yrinate a,c-diamide: step 7/7. Its function is as follows. Joins adenosylcobinamide-GDP and alpha-ribazole to generate adenosylcobalamin (Ado-cobalamin). Also synthesizes adenosylcobalamin 5'-phosphate from adenosylcobinamide-GDP and alpha-ribazole 5'-phosphate. In Escherichia coli O17:K52:H18 (strain UMN026 / ExPEC), this protein is Adenosylcobinamide-GDP ribazoletransferase.